The sequence spans 210 residues: MANAKELKQVLTGPIVSNNPIALQVLGVCSALAVTSKMETALVMTIALTVVCAFSNLFISILRNHIPSSVRIIVQMTIIASLVIVVDQVLQAYAYDVAKQLSVFVGLIITNCIVMGRAEAYAMKTPPMMSFMDGIGNGIGYGAILLSVGFIRELFGNGSLFGVEILSKVSDGGWYQPNGLLLLPPSAFFLIGMLIWIIRTYKPEQVEAKG.

The next 6 helical transmembrane spans lie at 14-34, 42-62, 72-92, 103-123, 131-151, and 178-198; these read PIVSNNPIALQVLGVCSALAV, LVMTIALTVVCAFSNLFISIL, IIVQMTIIASLVIVVDQVLQA, VFVGLIITNCIVMGRAEAYAM, FMDGIGNGIGYGAILLSVGFI, and NGLLLLPPSAFFLIGMLIWII.

It belongs to the NqrDE/RnfAE family. In terms of assembly, composed of six subunits; NqrA, NqrB, NqrC, NqrD, NqrE and NqrF.

It localises to the cell inner membrane. The enzyme catalyses a ubiquinone + n Na(+)(in) + NADH + H(+) = a ubiquinol + n Na(+)(out) + NAD(+). Its function is as follows. NQR complex catalyzes the reduction of ubiquinone-1 to ubiquinol by two successive reactions, coupled with the transport of Na(+) ions from the cytoplasm to the periplasm. NqrA to NqrE are probably involved in the second step, the conversion of ubisemiquinone to ubiquinol. The chain is Na(+)-translocating NADH-quinone reductase subunit D from Shewanella halifaxensis (strain HAW-EB4).